The chain runs to 316 residues: 4-hydroxy-3-methylbut-2-enyl diphosphate reductase (316 aa).

C12 provides a ligand contact to [4Fe-4S] cluster. H41 and H74 together coordinate (2E)-4-hydroxy-3-methylbut-2-enyl diphosphate. Residues H41 and H74 each contribute to the dimethylallyl diphosphate site. Residues H41 and H74 each contribute to the isopentenyl diphosphate site. [4Fe-4S] cluster is bound at residue C96. Residue H124 coordinates (2E)-4-hydroxy-3-methylbut-2-enyl diphosphate. Residue H124 coordinates dimethylallyl diphosphate. H124 is a binding site for isopentenyl diphosphate. E126 functions as the Proton donor in the catalytic mechanism. Residue T169 coordinates (2E)-4-hydroxy-3-methylbut-2-enyl diphosphate. C199 contacts [4Fe-4S] cluster. 4 residues coordinate (2E)-4-hydroxy-3-methylbut-2-enyl diphosphate: S227, S228, N229, and S271. Dimethylallyl diphosphate is bound by residues S227, S228, N229, and S271. Isopentenyl diphosphate is bound by residues S227, S228, N229, and S271.

Belongs to the IspH family. It depends on [4Fe-4S] cluster as a cofactor.

It catalyses the reaction isopentenyl diphosphate + 2 oxidized [2Fe-2S]-[ferredoxin] + H2O = (2E)-4-hydroxy-3-methylbut-2-enyl diphosphate + 2 reduced [2Fe-2S]-[ferredoxin] + 2 H(+). It carries out the reaction dimethylallyl diphosphate + 2 oxidized [2Fe-2S]-[ferredoxin] + H2O = (2E)-4-hydroxy-3-methylbut-2-enyl diphosphate + 2 reduced [2Fe-2S]-[ferredoxin] + 2 H(+). It participates in isoprenoid biosynthesis; dimethylallyl diphosphate biosynthesis; dimethylallyl diphosphate from (2E)-4-hydroxy-3-methylbutenyl diphosphate: step 1/1. Its pathway is isoprenoid biosynthesis; isopentenyl diphosphate biosynthesis via DXP pathway; isopentenyl diphosphate from 1-deoxy-D-xylulose 5-phosphate: step 6/6. Its function is as follows. Catalyzes the conversion of 1-hydroxy-2-methyl-2-(E)-butenyl 4-diphosphate (HMBPP) into a mixture of isopentenyl diphosphate (IPP) and dimethylallyl diphosphate (DMAPP). Acts in the terminal step of the DOXP/MEP pathway for isoprenoid precursor biosynthesis. The sequence is that of 4-hydroxy-3-methylbut-2-enyl diphosphate reductase from Stenotrophomonas maltophilia (strain R551-3).